Reading from the N-terminus, the 451-residue chain is L-seryl-tRNA(Sec) selenium transferase (451 aa).

Residue Lys-286 is modified to N6-(pyridoxal phosphate)lysine.

This sequence belongs to the SelA family. It depends on pyridoxal 5'-phosphate as a cofactor.

Its subcellular location is the cytoplasm. The catalysed reaction is L-seryl-tRNA(Sec) + selenophosphate + H(+) = L-selenocysteinyl-tRNA(Sec) + phosphate. The protein operates within aminoacyl-tRNA biosynthesis; selenocysteinyl-tRNA(Sec) biosynthesis; selenocysteinyl-tRNA(Sec) from L-seryl-tRNA(Sec) (bacterial route): step 1/1. Converts seryl-tRNA(Sec) to selenocysteinyl-tRNA(Sec) required for selenoprotein biosynthesis. This Aliarcobacter butzleri (strain RM4018) (Arcobacter butzleri) protein is L-seryl-tRNA(Sec) selenium transferase.